The sequence spans 96 residues: Putative pterin-4-alpha-carbinolamine dehydratase (96 aa).

The protein belongs to the pterin-4-alpha-carbinolamine dehydratase family.

The catalysed reaction is (4aS,6R)-4a-hydroxy-L-erythro-5,6,7,8-tetrahydrobiopterin = (6R)-L-erythro-6,7-dihydrobiopterin + H2O. This chain is Putative pterin-4-alpha-carbinolamine dehydratase, found in Paraburkholderia xenovorans (strain LB400).